A 428-amino-acid chain; its full sequence is Adenylosuccinate synthetase (428 aa).

Residues 12–18 (GDEGKGK) and 40–42 (GHT) contribute to the GTP site. Asp-13 functions as the Proton acceptor in the catalytic mechanism. Mg(2+) contacts are provided by Asp-13 and Gly-40. IMP contacts are provided by residues 13-16 (DEGK), 38-41 (NAGH), Thr-129, Arg-143, Gln-224, Thr-239, and Arg-303. The Proton donor role is filled by His-41. 299–305 (VTTGRIR) is a binding site for substrate. GTP contacts are provided by residues Arg-305, 331 to 333 (KVD), and 410 to 412 (AYG).

This sequence belongs to the adenylosuccinate synthetase family. Homodimer. Mg(2+) is required as a cofactor.

It is found in the cytoplasm. The catalysed reaction is IMP + L-aspartate + GTP = N(6)-(1,2-dicarboxyethyl)-AMP + GDP + phosphate + 2 H(+). It functions in the pathway purine metabolism; AMP biosynthesis via de novo pathway; AMP from IMP: step 1/2. Plays an important role in the de novo pathway of purine nucleotide biosynthesis. Catalyzes the first committed step in the biosynthesis of AMP from IMP. In Francisella philomiragia subsp. philomiragia (strain ATCC 25017 / CCUG 19701 / FSC 153 / O#319-036), this protein is Adenylosuccinate synthetase.